We begin with the raw amino-acid sequence, 219 residues long: Probable glutathione S-transferase GSTF1 (219 aa).

Positions 2–83 constitute a GST N-terminal domain; that stretch reads TPVKVFGPAQ…YILRKYKTRE (82 aa). Glutathione contacts are provided by residues serine 12, 41 to 42, 54 to 55, and 67 to 68; these read HK, QI, and ES. A GST C-terminal domain is found at 91–219; that stretch reads NLREAAMVDV…LAAVMAPQGA (129 aa).

It belongs to the GST superfamily. Phi family. As to expression, constitutively expressed in roots.

The enzyme catalyses RX + glutathione = an S-substituted glutathione + a halide anion + H(+). In terms of biological role, conjugation of reduced glutathione to a wide number of exogenous and endogenous hydrophobic electrophiles. The polypeptide is Probable glutathione S-transferase GSTF1 (GSTF1) (Oryza sativa subsp. japonica (Rice)).